Reading from the N-terminus, the 109-residue chain is Small ribosomal subunit protein bS6 (109 aa).

This sequence belongs to the bacterial ribosomal protein bS6 family.

Its function is as follows. Binds together with bS18 to 16S ribosomal RNA. This is Small ribosomal subunit protein bS6 from Ehrlichia canis (strain Jake).